Here is a 90-residue protein sequence, read N- to C-terminus: MAVKIRLKRMGAKKTPFYRVVVADSRSPRDGRFIEEIGTYNPVAQPAEVKINEEAALKWLGNGAKPSDTVRNLFSNQGIMEKFHLSKQGK.

It belongs to the bacterial ribosomal protein bS16 family.

The sequence is that of Small ribosomal subunit protein bS16 from Bacillus anthracis (strain A0248).